The following is a 224-amino-acid chain: Mammalian ependymin-related protein 1 (224 aa).

The first 37 residues, 1–37 (MLTRAPRRLVQGPRETWLLGGLWVWILCGLGMAGSPG), serve as a signal peptide directing secretion. Disulfide bonds link cysteine 42–cysteine 172, cysteine 88–cysteine 222, and cysteine 113–cysteine 210. N-linked (GlcNAc...) asparagine glycans are attached at residues asparagine 130 and asparagine 182.

It belongs to the ependymin family. In terms of assembly, homodimer. In terms of processing, N-glycosylated; the glycan contains mannose-6-phosphate moieties. Detected in brain (at protein level).

Its subcellular location is the lysosome lumen. The protein localises to the secreted. In terms of biological role, binds anionic lipids and gangliosides at acidic pH. This Rattus norvegicus (Rat) protein is Mammalian ependymin-related protein 1 (Epdr1).